The sequence spans 624 residues: Threonine--tRNA ligase (624 aa).

Positions 1 to 143 (MRLLFIHADE…SRTVTPEAAE (143 aa)) are editing domain. A catalytic region spans residues 197–499 (AHVKLMREKE…EQEGKLPTLP (303 aa)). Cys-289, His-340, and His-467 together coordinate Zn(2+). Residues 598-624 (LERETEGKPRVPLTIPDRLSRRPRFGR) are disordered.

The protein belongs to the class-II aminoacyl-tRNA synthetase family. In terms of assembly, homodimer. Requires Zn(2+) as cofactor.

It localises to the cytoplasm. It catalyses the reaction tRNA(Thr) + L-threonine + ATP = L-threonyl-tRNA(Thr) + AMP + diphosphate + H(+). Catalyzes the attachment of threonine to tRNA(Thr) in a two-step reaction: L-threonine is first activated by ATP to form Thr-AMP and then transferred to the acceptor end of tRNA(Thr). Also edits incorrectly charged L-seryl-tRNA(Thr). This Methanopyrus kandleri (strain AV19 / DSM 6324 / JCM 9639 / NBRC 100938) protein is Threonine--tRNA ligase.